A 94-amino-acid chain; its full sequence is Co-chaperonin GroES (94 aa).

The protein belongs to the GroES chaperonin family. As to quaternary structure, heptamer of 7 subunits arranged in a ring. Interacts with the chaperonin GroEL.

The protein resides in the cytoplasm. Functionally, together with the chaperonin GroEL, plays an essential role in assisting protein folding. The GroEL-GroES system forms a nano-cage that allows encapsulation of the non-native substrate proteins and provides a physical environment optimized to promote and accelerate protein folding. GroES binds to the apical surface of the GroEL ring, thereby capping the opening of the GroEL channel. In Streptococcus pneumoniae serotype 19F (strain G54), this protein is Co-chaperonin GroES.